Consider the following 528-residue polypeptide: Probable cyclic di-GMP phosphodiesterase PdeC (528 aa).

The next 2 helical transmembrane spans lie at 14 to 34 (GIIF…FLWA) and 242 to 262 (HLIF…LLWL). Positions 268–520 (YLSPKRKLQR…VFMQWMEQLP (253 aa)) constitute an EAL domain.

It localises to the cell inner membrane. It catalyses the reaction 3',3'-c-di-GMP + H2O = 5'-phosphoguanylyl(3'-&gt;5')guanosine + H(+). Its function is as follows. Phosphodiesterase (PDE) that catalyzes the hydrolysis of cyclic-di-GMP (c-di-GMP) to 5'-pGpG. Cyclic-di-GMP is a second messenger which controls cell surface-associated traits in bacteria. Overexpression reduces biofilm formation. This is Probable cyclic di-GMP phosphodiesterase PdeC from Escherichia coli (strain K12).